A 906-amino-acid chain; its full sequence is Interference hedgehog (906 aa).

A signal peptide spans 1–20 (MSPLTSSLLLFSLLTSSLEA). At 21–715 (IPVLQPSFPP…SHNETVSMSP (695 aa)) the chain is on the extracellular side. Ig-like C2-type domains follow at residues 39 to 144 (PGVR…TARL), 134 to 236 (PLVV…ISSS), 252 to 341 (PHLL…INVT), and 346 to 433 (PRIT…LQVN). A disulfide bond links Cys-62 and Cys-128. 4 N-linked (GlcNAc...) asparagine glycosylation sites follow: Asn-85, Asn-104, Asn-148, and Asn-209. Disulfide bonds link Cys-173–Cys-220 and Cys-276–Cys-324. N-linked (GlcNAc...) asparagine glycosylation is found at Asn-339 and Asn-388. Residues Cys-367 and Cys-415 are joined by a disulfide bond. A compositionally biased stretch (polar residues) spans 427–439 (GTLLQVNPKQIQS). Residues 427-476 (GTLLQVNPKQIQSEPRETGSGGGFGSHRSMKPVNHGQKPTKMIPPSPPNV) are disordered. Fibronectin type-III domains are found at residues 470–578 (PPSP…LQPG) and 586–681 (VPEL…TQRP). Asn-475 carries N-linked (GlcNAc...) asparagine glycosylation. Heparin-binding residues include Arg-506, Lys-512, Lys-514, and Arg-552. Asn-568 is a glycosylation site (N-linked (GlcNAc...) asparagine). The disordered stretch occupies residues 673 to 713 (LKQGRTQRPRASTTEEPTIQGIGDRDTTSHNQPSHNETVSM). 2 stretches are compositionally biased toward polar residues: residues 676 to 689 (GRTQ…TEEP) and 701 to 713 (SHNQ…TVSM). Residues 716–736 (MLTGTIGGGALLLILLVSAFL) traverse the membrane as a helical segment. Over 737–906 (CMCRRRSPRG…SSGSLNSVGV (170 aa)) the chain is Cytoplasmic. The segment at 789 to 906 (AQQQQQQLDE…SSGSLNSVGV (118 aa)) is disordered. 2 stretches are compositionally biased toward low complexity: residues 854–866 (GNNN…SEAG) and 890–906 (SSRS…SVGV).

Belongs to the immunoglobulin superfamily. IHOG family. In terms of assembly, homodimer. Heterotetramer; 2 iHog chains bind 2 hh chains when facilitated by heparin, heparin is required to promote high-affinity interactions between hh and iHog.

It localises to the membrane. Mediates response to the active Hedgehog (Hh) protein signal in embryos, functioning upstream or at the level of patched (ptc). This Drosophila persimilis (Fruit fly) protein is Interference hedgehog.